The chain runs to 83 residues: Mu-theraphotoxin-Hhn2j 4 (83 aa).

The signal sequence occupies residues methionine 1–alanine 21. Positions serine 22–arginine 48 are excised as a propeptide. Disulfide bonds link cysteine 50/cysteine 65, cysteine 57/cysteine 70, and cysteine 64/cysteine 77. At leucine 81 the chain carries Leucine amide.

Belongs to the neurotoxin 10 (Hwtx-1) family. 15 (Hntx-3) subfamily. In terms of assembly, monomer. As to expression, expressed by the venom gland.

It localises to the secreted. Its function is as follows. Lethal neurotoxin. Selectively blocks tetrodotoxin-sensitive voltage-gated sodium channels (Nav). Does not affect tetrodotoxin-resistant voltage-gated sodium channels or calcium channels. This Cyriopagopus hainanus (Chinese bird spider) protein is Mu-theraphotoxin-Hhn2j 4.